We begin with the raw amino-acid sequence, 199 residues long: Protein ZNRD2 (199 aa).

Position 2 is an N-acetylalanine (Ala2). Zn(2+) contacts are provided by Cys53, Cys56, Cys70, and Cys73. Phosphoserine is present on Ser94. Positions 100–125 (QLASASELPLGSRPAPQPPVPRPEHC) are disordered. A Nuclear export signal motif is present at residues 173-194 (SLETSIQLCGLIRACAEALRSL).

As to quaternary structure, homodimer. It depends on Zn(2+) as a cofactor.

It is found in the cytoplasm. Its function is as follows. Might play a role in mitosis. Antigenic molecule. Could be a centromere-associated protein. May induce anti-centromere antibodies. The chain is Protein ZNRD2 from Homo sapiens (Human).